A 217-amino-acid chain; its full sequence is Translation initiation factor 6 (217 aa).

This sequence belongs to the eIF-6 family.

Functionally, binds to the 50S ribosomal subunit and prevents its association with the 30S ribosomal subunit to form the 70S initiation complex. The sequence is that of Translation initiation factor 6 from Picrophilus torridus (strain ATCC 700027 / DSM 9790 / JCM 10055 / NBRC 100828 / KAW 2/3).